The chain runs to 554 residues: Carboxypeptidase Y homolog A (554 aa).

Residues 1–17 form the signal peptide; the sequence is MRISASTVLLGAASAAS. The propeptide occupies 18-137; the sequence is AASFQNQAQQ…QLDNFNLRVK (120 aa). 5 disulfides stabilise this stretch: Cys191–Cys431, Cys325–Cys339, Cys349–Cys372, Cys356–Cys365, and Cys394–Cys401. N-linked (GlcNAc...) asparagine glycosylation is present at Asn222. The active site involves Ser278. Asp470 is an active-site residue. Asn518 carries N-linked (GlcNAc...) asparagine glycosylation. His529 is an active-site residue.

Belongs to the peptidase S10 family.

The protein resides in the vacuole. It carries out the reaction Release of a C-terminal amino acid with broad specificity.. Its function is as follows. Vacuolar carboxypeptidase involved in degradation of small peptides. Digests preferentially peptides containing an aliphatic or hydrophobic residue in P1' position, as well as methionine, leucine or phenylalanine in P1 position of ester substrate. This Sordaria macrospora (strain ATCC MYA-333 / DSM 997 / K(L3346) / K-hell) protein is Carboxypeptidase Y homolog A (CPYA).